A 91-amino-acid chain; its full sequence is Small ribosomal subunit protein uS19 (91 aa).

The protein belongs to the universal ribosomal protein uS19 family.

Protein S19 forms a complex with S13 that binds strongly to the 16S ribosomal RNA. In Alcanivorax borkumensis (strain ATCC 700651 / DSM 11573 / NCIMB 13689 / SK2), this protein is Small ribosomal subunit protein uS19.